We begin with the raw amino-acid sequence, 396 residues long: Elongation factor Tu (396 aa).

Residues 10–205 (KPHVNIGTIG…AVDSYIPTPE (196 aa)) form the tr-type G domain. Residues 19 to 26 (GHVDHGKT) form a G1 region. 19–26 (GHVDHGKT) serves as a coordination point for GTP. Threonine 26 lines the Mg(2+) pocket. Positions 60–64 (GITIN) are G2. Residues 81 to 84 (DCPG) are G3. GTP-binding positions include 81 to 85 (DCPGH) and 136 to 139 (NKCD). Positions 136–139 (NKCD) are G4. The G5 stretch occupies residues 174 to 176 (SAK).

The protein belongs to the TRAFAC class translation factor GTPase superfamily. Classic translation factor GTPase family. EF-Tu/EF-1A subfamily. As to quaternary structure, monomer.

Its subcellular location is the cytoplasm. It catalyses the reaction GTP + H2O = GDP + phosphate + H(+). Functionally, GTP hydrolase that promotes the GTP-dependent binding of aminoacyl-tRNA to the A-site of ribosomes during protein biosynthesis. This chain is Elongation factor Tu, found in Brevibacillus brevis (strain 47 / JCM 6285 / NBRC 100599).